A 235-amino-acid polypeptide reads, in one-letter code: Protein FAM3B (235 aa).

Positions 1 to 29 (MRPLAGGLLKVVFVVFASLCAWYSGYLLA) are cleaved as a signal peptide. 2 disulfides stabilise this stretch: Cys63-Cys91 and Cys69-Cys229. A GG-type lectin domain is found at 72–233 (DTYAYRLLSG…IQIEGCIPKE (162 aa)). 2 N-linked (GlcNAc...) asparagine glycosylation sites follow: Asn120 and Asn208.

It belongs to the FAM3 family. In terms of processing, 2 N-termini have been observed in the mature protein: the first at Glu-30, resulting from signal peptide cleavage, the second at Ser-46. Post-translationally, O-glycosylated. In terms of tissue distribution, highly expressed in the pancreas. Also found in the colon, kidney, prostate, small intestine and testis.

It is found in the secreted. Its function is as follows. Induces apoptosis of alpha and beta cells in a dose- and time-dependent manner. The sequence is that of Protein FAM3B (FAM3B) from Homo sapiens (Human).